The sequence spans 259 residues: Deoxyribose-phosphate aldolase (259 aa).

Asp102 (proton donor/acceptor) is an active-site residue. Catalysis depends on Lys167, which acts as the Schiff-base intermediate with acetaldehyde. Catalysis depends on Lys201, which acts as the Proton donor/acceptor.

It belongs to the DeoC/FbaB aldolase family. DeoC type 2 subfamily.

The protein localises to the cytoplasm. The catalysed reaction is 2-deoxy-D-ribose 5-phosphate = D-glyceraldehyde 3-phosphate + acetaldehyde. The protein operates within carbohydrate degradation; 2-deoxy-D-ribose 1-phosphate degradation; D-glyceraldehyde 3-phosphate and acetaldehyde from 2-deoxy-alpha-D-ribose 1-phosphate: step 2/2. Its function is as follows. Catalyzes a reversible aldol reaction between acetaldehyde and D-glyceraldehyde 3-phosphate to generate 2-deoxy-D-ribose 5-phosphate. This Cronobacter sakazakii (strain ATCC BAA-894) (Enterobacter sakazakii) protein is Deoxyribose-phosphate aldolase.